Reading from the N-terminus, the 372-residue chain is GPN-loop GTPase 1 (372 aa).

Alanine 2 carries the N-acetylalanine modification. Residue glycine 29–threonine 34 coordinates GTP. The Gly-Pro-Asn (GPN)-loop; involved in dimer interface signature appears at glycine 86–asparagine 88. Residue asparagine 189 to aspartate 192 participates in GTP binding. Residues serine 301 and serine 314 each carry the phosphoserine modification. Residues alanine 303–lysine 372 form a disordered region. Position 328 is a phosphothreonine (threonine 328). Acidic residues predominate over residues aspartate 330–aspartate 342. Serine 338 carries the post-translational modification Phosphoserine. Threonine 340 carries the post-translational modification Phosphothreonine. The segment covering isoleucine 343 to proline 355 has biased composition (basic and acidic residues).

Belongs to the GPN-loop GTPase family. As to quaternary structure, heterodimer with GPN3. Binds to RNA polymerase II (RNAPII). Interacts directly with RNAPII subunits RPB4 and RPB7 and the CTD of RPB1. Interacts with XPA.

It is found in the cytoplasm. It localises to the nucleus. Its function is as follows. Small GTPase required for proper nuclear import of RNA polymerase II (RNAPII). May act at an RNAP assembly step prior to nuclear import. Forms an interface between the RNA polymerase II enzyme and chaperone/scaffolding proteins, suggesting that it is required to connect RNA polymerase II to regulators of protein complex formation. May be involved in nuclear localization of XPA. In Mus musculus (Mouse), this protein is GPN-loop GTPase 1.